A 449-amino-acid polypeptide reads, in one-letter code: Tubulin alpha chain (449 aa).

Q11 serves as a coordination point for GTP. At K40 the chain carries N6-acetyllysine. Positions 71, 140, 144, 145, 179, 206, and 228 each coordinate GTP. A Mg(2+)-binding site is contributed by E71. The active site involves E254.

The protein belongs to the tubulin family. As to quaternary structure, dimer of alpha and beta chains. A typical microtubule is a hollow water-filled tube with an outer diameter of 25 nm and an inner diameter of 15 nM. Alpha-beta heterodimers associate head-to-tail to form protofilaments running lengthwise along the microtubule wall with the beta-tubulin subunit facing the microtubule plus end conferring a structural polarity. Microtubules usually have 13 protofilaments but different protofilament numbers can be found in some organisms and specialized cells. It depends on Mg(2+) as a cofactor. Post-translationally, undergoes a tyrosination/detyrosination cycle, the cyclic removal and re-addition of a C-terminal tyrosine residue by the enzymes tubulin tyrosine carboxypeptidase (TTCP) and tubulin tyrosine ligase (TTL), respectively. In terms of processing, acetylation of alpha chains at Lys-40 stabilizes microtubules and affects affinity and processivity of microtubule motors. This modification has a role in multiple cellular functions, ranging from cell motility, cell cycle progression or cell differentiation to intracellular trafficking and signaling.

The protein resides in the cytoplasm. The protein localises to the cytoskeleton. It carries out the reaction GTP + H2O = GDP + phosphate + H(+). Its function is as follows. Tubulin is the major constituent of microtubules, a cylinder consisting of laterally associated linear protofilaments composed of alpha- and beta-tubulin heterodimers. Microtubules grow by the addition of GTP-tubulin dimers to the microtubule end, where a stabilizing cap forms. Below the cap, tubulin dimers are in GDP-bound state, owing to GTPase activity of alpha-tubulin. The polypeptide is Tubulin alpha chain (Tetrahymena pyriformis).